Consider the following 98-residue polypeptide: Large ribosomal subunit protein bL28 (98 aa).

The protein belongs to the bacterial ribosomal protein bL28 family.

The sequence is that of Large ribosomal subunit protein bL28 from Thermus thermophilus (strain ATCC BAA-163 / DSM 7039 / HB27).